We begin with the raw amino-acid sequence, 1020 residues long: LLGL scribble cell polarity complex component 2 (1020 aa).

WD repeat units lie at residues 36–69 (SALG…FMGL), 76–117 (VTQI…DESF), 132–169 (ITVV…DRTI), 193–227 (ALQE…LYHF), 233–268 (LENI…QPEP), 282–324 (AITR…GQQT), 332–366 (VIGF…VIDL), 388–464 (TCSH…YKLS), 508–583 (QKIF…FVLV), 592–653 (TSLA…LRQS), 713–769 (VRTL…KEIQ), 778–830 (GILV…VSAK), 835–888 (LTAL…VRYS), and 902–925 (VFTK…SLST). Serine 653 bears the Phosphoserine mark. The segment covering 653 to 669 (SFRRMRRSRVSSRKRHP) has biased composition (basic residues). The segment at 653-689 (SFRRMRRSRVSSRKRHPAGPPGEAQEGSAKAERPGLQ) is disordered. 2 disordered regions span residues 938–975 (AETK…PGLV) and 992–1020 (STLE…GGAE). A phosphoserine mark is found at serine 965 and serine 1015.

Belongs to the WD repeat L(2)GL family. In terms of assembly, interacts with GPSM2/LGN, PRKCI/aPKC and PARD6B/Par-6. The complex is enhanced during mitosis. Interacts with DCAF1. Phosphorylated at Ser-653 by PRKCI. Phosphorylation is enhanced during cell polarization induced by calcium. Phosphorylation may occur during the cell-cell contact-induced cell polarization and may contribute to the segregation of LLGL2 from the PRKCI/aPKC and PARD6B/Par-6 complex.

The protein localises to the cytoplasm. Functionally, part of a complex with GPSM2/LGN, PRKCI/aPKC and PARD6B/Par-6, which may ensure the correct organization and orientation of bipolar spindles for normal cell division. This complex plays roles in the initial phase of the establishment of epithelial cell polarity. This chain is LLGL scribble cell polarity complex component 2 (LLGL2), found in Homo sapiens (Human).